Consider the following 217-residue polypeptide: Redox-sensing transcriptional repressor Rex (217 aa).

Residues 17–56 (RYLRYVEDLLNHDVLRISSSELSQRMGYTASQVRQDFNNF) constitute a DNA-binding region (H-T-H motif). 91–96 (GVGNLG) contacts NAD(+).

Belongs to the transcriptional regulatory Rex family. As to quaternary structure, homodimer.

Its subcellular location is the cytoplasm. Functionally, modulates transcription in response to changes in cellular NADH/NAD(+) redox state. The protein is Redox-sensing transcriptional repressor Rex of Caldicellulosiruptor bescii (strain ATCC BAA-1888 / DSM 6725 / KCTC 15123 / Z-1320) (Anaerocellum thermophilum).